The sequence spans 244 residues: MSDTPDLAGVWKAKILTLFPEAFPGVLGESLTGKALQQGLWQLETVDLRPFGIGKHKNVDDTPAGGGAGMVLRADVLGDAIEHAMQGTAGNWPLIYLSPRGRRMDQQMMQTFARCDGLTLLCGRFEGVDERVLEHYGIQEVSLGDFVMTGGELAAQALIDATVRLIPGVLGNQASTEEESFSSGLLEHPQYTRPADWKGRAIPDVLMSGHHGKIAEWRQDMSEKITQERRPDLWAAYQARKSKT.

S-adenosyl-L-methionine is bound by residues Gly123 and Leu143–Met148.

It belongs to the RNA methyltransferase TrmD family. As to quaternary structure, homodimer.

It localises to the cytoplasm. The catalysed reaction is guanosine(37) in tRNA + S-adenosyl-L-methionine = N(1)-methylguanosine(37) in tRNA + S-adenosyl-L-homocysteine + H(+). Functionally, specifically methylates guanosine-37 in various tRNAs. The sequence is that of tRNA (guanine-N(1)-)-methyltransferase from Ruegeria sp. (strain TM1040) (Silicibacter sp.).